Consider the following 285-residue polypeptide: V-type proton ATPase subunit D (285 aa).

The span at 208–226 (QKTKENAEKADSVTKEEHQ) shows a compositional bias: basic and acidic residues. Residues 208-285 (QKTKENAEKA…ENDSDEEVIF (78 aa)) are disordered. A Phosphoserine modification is found at S219. A compositionally biased stretch (polar residues) spans 227-236 (GGSNTLQQTK). Over residues 248-263 (VGKEVINEVENSKDDT) the composition is skewed to basic and acidic residues. A compositionally biased stretch (acidic residues) spans 271–285 (TDDEEENDSDEEVIF).

Belongs to the V-ATPase D subunit family. V-ATPase is a heteromultimeric enzyme composed of a peripheral catalytic V1 complex (components A to H) attached to an integral membrane V0 proton pore complex (components: a, c, c', c'', d, e, f and VOA1).

The protein localises to the vacuole membrane. In terms of biological role, subunit of the V1 complex of vacuolar(H+)-ATPase (V-ATPase), a multisubunit enzyme composed of a peripheral complex (V1) that hydrolyzes ATP and a membrane integral complex (V0) that translocates protons. V-ATPase is responsible for acidifying and maintaining the pH of intracellular compartments. The polypeptide is V-type proton ATPase subunit D (vma8) (Schizosaccharomyces pombe (strain 972 / ATCC 24843) (Fission yeast)).